Consider the following 207-residue polypeptide: Cytochrome c biogenesis ATP-binding export protein CcmA (207 aa).

The ABC transporter domain occupies 4–207; that stretch reads LEVRELLCER…RISLTQTRAV (204 aa). Residue 36 to 43 participates in ATP binding; it reads GSNGAGKT.

Belongs to the ABC transporter superfamily. CcmA exporter (TC 3.A.1.107) family. The complex is composed of two ATP-binding proteins (CcmA) and two transmembrane proteins (CcmB).

It localises to the cell inner membrane. It carries out the reaction heme b(in) + ATP + H2O = heme b(out) + ADP + phosphate + H(+). Functionally, part of the ABC transporter complex CcmAB involved in the biogenesis of c-type cytochromes; once thought to export heme, this seems not to be the case, but its exact role is uncertain. Responsible for energy coupling to the transport system. This chain is Cytochrome c biogenesis ATP-binding export protein CcmA, found in Shigella dysenteriae serotype 1 (strain Sd197).